Consider the following 383-residue polypeptide: Deoxyguanosinetriphosphate triphosphohydrolase-like protein (383 aa).

The HD domain occupies 62–198 (RLTHSLEVST…AALADDISYI (137 aa)).

Belongs to the dGTPase family. Type 2 subfamily.

The polypeptide is Deoxyguanosinetriphosphate triphosphohydrolase-like protein (Rickettsia felis (strain ATCC VR-1525 / URRWXCal2) (Rickettsia azadi)).